The chain runs to 83 residues: UPF0297 protein LEUM_0557 (83 aa).

It belongs to the UPF0297 family.

This chain is UPF0297 protein LEUM_0557, found in Leuconostoc mesenteroides subsp. mesenteroides (strain ATCC 8293 / DSM 20343 / BCRC 11652 / CCM 1803 / JCM 6124 / NCDO 523 / NBRC 100496 / NCIMB 8023 / NCTC 12954 / NRRL B-1118 / 37Y).